The primary structure comprises 678 residues: THO complex subunit 5 homolog B (678 aa).

Disordered regions lie at residues 1–37 and 294–329; these read MSSD…EEAE and ALFK…VQLD. The Nuclear localization signal signature appears at 7–10; it reads KKRK. Basic and acidic residues predominate over residues 14–37; it reads NRSEDGKRGRHDEQEGRYYSEEAE. Residues 301 to 314 show a composition bias toward acidic residues; the sequence is DSQDDESDSDAEEE.

Belongs to the THOC5 family. Component of the THO subcomplex, which is composed of thoc1, thoc2, thoc3, thoc5, thoc6 and thoc7. Component of the transcription/export (TREX) complex at least composed of alyref/thoc4, ddx39b, sarnp/cip29, chtop and the THO subcomplex. Interacts with thoc7.

The protein resides in the nucleus. The protein localises to the nucleus speckle. It localises to the cytoplasm. In terms of biological role, component of the THO subcomplex of the TREX complex which is thought to couple mRNA transcription, processing and nuclear export, and which specifically associates with spliced mRNA and not with unspliced pre-mRNA. Plays a key structural role in the oligomerization of the THO-ddx39b complex. TREX is recruited to spliced mRNAs by a transcription-independent mechanism, binds to mRNA upstream of the exon-junction complex (EJC) and is recruited in a splicing- and cap-dependent manner to a region near the 5' end of the mRNA where it functions in mRNA export to the cytoplasm via the TAP/NXF1 pathway. May be involved in cell differentiation. This is THO complex subunit 5 homolog B (thoc5-b) from Xenopus laevis (African clawed frog).